The sequence spans 878 residues: Probable outer membrane protein PmpI (878 aa).

The signal sequence occupies residues 1-24 (MRPDHMNFCCLCAAILSSTAVLFG). The segment covering 360–371 (SSKESPLPSSLQ) has biased composition (low complexity). The segment at 360–381 (SSKESPLPSSLQASVTSPTPAT) is disordered. Residues 372 to 381 (ASVTSPTPAT) are compositionally biased toward polar residues. Residues 602 to 878 (GGAYLFGTWG…SLDLGTTYRF (277 aa)) form the Autotransporter domain.

Belongs to the PMP outer membrane protein family.

The protein resides in the secreted. It is found in the cell wall. The protein localises to the cell outer membrane. In Chlamydia trachomatis serovar D (strain ATCC VR-885 / DSM 19411 / UW-3/Cx), this protein is Probable outer membrane protein PmpI (pmpI).